Consider the following 194-residue polypeptide: Xanthine phosphoribosyltransferase (194 aa).

Xanthine-binding residues include Leu-20 and Asn-27. A 5-phospho-alpha-D-ribose 1-diphosphate-binding site is contributed by 128–132; sequence ANGQA. Lys-156 contributes to the xanthine binding site.

It belongs to the purine/pyrimidine phosphoribosyltransferase family. Xpt subfamily. As to quaternary structure, homodimer.

It localises to the cytoplasm. The catalysed reaction is XMP + diphosphate = xanthine + 5-phospho-alpha-D-ribose 1-diphosphate. It participates in purine metabolism; XMP biosynthesis via salvage pathway; XMP from xanthine: step 1/1. Functionally, converts the preformed base xanthine, a product of nucleic acid breakdown, to xanthosine 5'-monophosphate (XMP), so it can be reused for RNA or DNA synthesis. The chain is Xanthine phosphoribosyltransferase from Oceanobacillus iheyensis (strain DSM 14371 / CIP 107618 / JCM 11309 / KCTC 3954 / HTE831).